We begin with the raw amino-acid sequence, 194 residues long: Cell division protein SepF (194 aa).

Disordered regions lie at residues 35 to 54 (DHRS…DSSP) and 159 to 194 (SAPS…AGGL).

It belongs to the SepF family. As to quaternary structure, homodimer. Interacts with FtsZ.

The protein resides in the cytoplasm. In terms of biological role, cell division protein that is part of the divisome complex and is recruited early to the Z-ring. Probably stimulates Z-ring formation, perhaps through the cross-linking of FtsZ protofilaments. Its function overlaps with FtsA. This Prochlorococcus marinus (strain MIT 9313) protein is Cell division protein SepF.